The chain runs to 520 residues: Protein root UVB sensitive 4 (520 aa).

2 consecutive transmembrane segments (helical) span residues 275-295 (IQTV…NMLF) and 301-321 (LQAC…LLGI).

The protein belongs to the RUS1 family.

It is found in the membrane. This Arabidopsis thaliana (Mouse-ear cress) protein is Protein root UVB sensitive 4.